The following is a 475-amino-acid chain: Retrotransposon Gag-like protein 3 (475 aa).

Composition is skewed to basic and acidic residues over residues 51–66 (LLRK…KLPE) and 78–87 (KTPEFKEPQK). Disordered stretches follow at residues 51-101 (LLRK…EPPA), 152-173 (EPKN…APEY), and 397-421 (DPNP…ENQP). Residues 443–462 (RLCLYCGYPGHFARDCPVKP) form a CCHC-type zinc finger.

The protein resides in the nucleus. Functionally, may function as a transcriptional regulator. Plays a role in postnatal myogenesis, may be involved in the regulation of satellite cells self-renewal. The polypeptide is Retrotransposon Gag-like protein 3 (Homo sapiens (Human)).